Reading from the N-terminus, the 393-residue chain is NAD(P)H-quinone oxidoreductase subunit H, chloroplastic (393 aa).

Belongs to the complex I 49 kDa subunit family. As to quaternary structure, NDH is composed of at least 16 different subunits, 5 of which are encoded in the nucleus.

The protein resides in the plastid. It is found in the chloroplast thylakoid membrane. It carries out the reaction a plastoquinone + NADH + (n+1) H(+)(in) = a plastoquinol + NAD(+) + n H(+)(out). It catalyses the reaction a plastoquinone + NADPH + (n+1) H(+)(in) = a plastoquinol + NADP(+) + n H(+)(out). Its function is as follows. NDH shuttles electrons from NAD(P)H:plastoquinone, via FMN and iron-sulfur (Fe-S) centers, to quinones in the photosynthetic chain and possibly in a chloroplast respiratory chain. The immediate electron acceptor for the enzyme in this species is believed to be plastoquinone. Couples the redox reaction to proton translocation, and thus conserves the redox energy in a proton gradient. The protein is NAD(P)H-quinone oxidoreductase subunit H, chloroplastic of Hordeum vulgare (Barley).